Here is a 999-residue protein sequence, read N- to C-terminus: Sarcoplasmic/endoplasmic reticulum calcium ATPase 3 (999 aa).

M1 bears the N-acetylmethionine mark. At 1–48 the chain is on the cytoplasmic side; that stretch reads MEAAHLLPAADVLRHFSVTAEGGLSPAQVTGARERYGPNELPSEEGKS. Phosphoserine is present on S17. At T19 the chain carries Phosphothreonine. Position 25 is a phosphoserine (S25). The helical transmembrane segment at 49 to 69 threads the bilayer; sequence LWELVLEQFEDLLVRILLLAA. The Lumenal segment spans residues 70–89; sequence LVSFVLAWFEEGEETTTAFV. The helical transmembrane segment at 90–110 threads the bilayer; the sequence is EPLVIMLILVANAIVGVWQER. The Cytoplasmic portion of the chain corresponds to 111 to 253; sequence NAESAIEALK…PERTPLQRKL (143 aa). A helical membrane pass occupies residues 254 to 273; that stretch reads DEFGRQLSHAISVICVAVWV. Topologically, residues 274–295 are lumenal; it reads INIGHFADPAHGGSWLRGAVYY. The helical transmembrane segment at 296–313 threads the bilayer; the sequence is FKIAVALAVAAIPEGLPA. The Ca(2+) site is built by V304, A305, I307, and E309. Residues 314-757 are Cytoplasmic-facing; that stretch reads VITTCLALGT…EEGRAIYSNM (444 aa). The active-site 4-aspartylphosphate intermediate is the D351. Residues D351 and T353 each coordinate Mg(2+). T353 contacts ATP. An interaction with phospholamban 1 region spans residues 370–400; the sequence is AEADAGSCLLHEFTISGTTYTPEGEVRQGDQ. At T415 the chain carries Phosphothreonine. E442, R489, K515, R560, T625, G626, and D627 together coordinate ATP. S662 is modified (phosphoserine). 2 residues coordinate ATP: R678 and K684. D703 serves as a coordination point for Mg(2+). N706 is an ATP binding site. The chain crosses the membrane as a helical span at residues 758-777; sequence KQFIRYLISSNVGEVVCIFL. Positions 768 and 771 each coordinate Ca(2+). The Lumenal portion of the chain corresponds to 778 to 787; sequence TAILGLPEAL. A helical membrane pass occupies residues 788-808; it reads IPVQLLWVNLVTDGLPATALG. The segment at 788–808 is interaction with phospholamban 2; that stretch reads IPVQLLWVNLVTDGLPATALG. 3 residues coordinate Ca(2+): N796, T799, and D800. Over 809–828 the chain is Cytoplasmic; sequence FNPPDLDIMEKLPRSPREAL. A helical transmembrane segment spans residues 829 to 851; that stretch reads ISGWLFFRYLAIGVYVGLATVAA. Residues 852–897 are Lumenal-facing; the sequence is ATWWFVYDAEGPHINFYQLRNFLKCSEDNPLFAGIDCEVFESRFPT. Residues 898–917 form a helical membrane-spanning segment; it reads TMALSVLVTIEMCNALNSVS. E908 contributes to the Ca(2+) binding site. Residues 918–930 are Cytoplasmic-facing; the sequence is ENQSLLRMPPWMN. The chain crosses the membrane as a helical span at residues 931–949; it reads PWLLVAVAMSMALHFLILL. Over 950–964 the chain is Lumenal; the sequence is VPPLPLIFQVTPLSG. A helical transmembrane segment spans residues 965–985; that stretch reads RQWVVVLQISLPVILLDEALK. At 986-999 the chain is on the cytoplasmic side; that stretch reads YLSRNHMHEEMSQK.

This sequence belongs to the cation transport ATPase (P-type) (TC 3.A.3) family. Type IIA subfamily. As to quaternary structure, interacts with sarcolipin (SLN). Interacts with phospholamban (PLN). Interacts with myoregulin (MRLN). Interacts with DWORF. Interacts with VMP1. Interacts with TUNAR; the interaction occurs at low levels in low glucose conditions and is increased by high glucose levels. It depends on Mg(2+) as a cofactor. Found in most tissues. Most abundant in thymus, trachea, salivary gland, spleen, bone marrow, lymph node, peripheral leukocytes, pancreas and colon. Also detected in fetal tissues. Expressed in cell lineages of hematopoietic, epithelial, or embryonic origin and also expressed in several cancer cell lines.

It localises to the nucleus membrane. Its subcellular location is the endoplasmic reticulum membrane. It is found in the sarcoplasmic reticulum membrane. The catalysed reaction is Ca(2+)(in) + ATP + H2O = Ca(2+)(out) + ADP + phosphate + H(+). Its activity is regulated as follows. Inhibited by sarcolipin (SLN), phospholamban (PLN) and myoregulin (MRLN). Enhanced by DWORF; DWORF increases activity by displacing sarcolipin (SLN), phospholamban (PLN) and myoregulin (MRLN). In terms of biological role, this magnesium-dependent enzyme catalyzes the hydrolysis of ATP coupled with the transport of calcium. Transports calcium ions from the cytosol into the sarcoplasmic/endoplasmic reticulum lumen. Contributes to calcium sequestration involved in muscular excitation/contraction. The sequence is that of Sarcoplasmic/endoplasmic reticulum calcium ATPase 3 from Homo sapiens (Human).